The primary structure comprises 232 residues: Orotidine 5'-phosphate decarboxylase (232 aa).

Substrate-binding positions include D11, K33, 61-70 (DMKLFDIGAT), T116, R179, Q188, G208, and R209. K63 functions as the Proton donor in the catalytic mechanism.

This sequence belongs to the OMP decarboxylase family. Type 1 subfamily. In terms of assembly, homodimer.

It catalyses the reaction orotidine 5'-phosphate + H(+) = UMP + CO2. It participates in pyrimidine metabolism; UMP biosynthesis via de novo pathway; UMP from orotate: step 2/2. In terms of biological role, catalyzes the decarboxylation of orotidine 5'-monophosphate (OMP) to uridine 5'-monophosphate (UMP). The protein is Orotidine 5'-phosphate decarboxylase of Cereibacter sphaeroides (strain ATCC 17023 / DSM 158 / JCM 6121 / CCUG 31486 / LMG 2827 / NBRC 12203 / NCIMB 8253 / ATH 2.4.1.) (Rhodobacter sphaeroides).